An 862-amino-acid polypeptide reads, in one-letter code: Leucine--tRNA ligase (862 aa).

A 'HIGH' region motif is present at residues 42–52; the sequence is PYPSGKIHIGH. The 'KMSKS' region motif lies at 614-618; sequence KMSKS. Lysine 617 contributes to the ATP binding site.

The protein belongs to the class-I aminoacyl-tRNA synthetase family.

The protein localises to the cytoplasm. It catalyses the reaction tRNA(Leu) + L-leucine + ATP = L-leucyl-tRNA(Leu) + AMP + diphosphate. This chain is Leucine--tRNA ligase, found in Syntrophus aciditrophicus (strain SB).